The primary structure comprises 322 residues: Nodulation protein Z (322 aa).

Positions 1-314 (MYNRYVLSRR…NDPSRLVVIE (314 aa)) constitute a GT23 domain.

It belongs to the glycosyltransferase 23 family.

Its function is as follows. Fucosyltransferase which adds the fucose moiety of the nod factor on its terminal reducing N-acetylglucosamine end. Uses GDP-fucose as the donor group. The sequence is that of Nodulation protein Z (nodZ) from Sinorhizobium fredii (strain NBRC 101917 / NGR234).